A 409-amino-acid polypeptide reads, in one-letter code: uncharacterized protein (409 aa).

Residues 1–39 form the signal peptide; it reads MVSDSKLELPLPVNQQKPRRRRILKVHLLIAALILSAVG. 5 residues coordinate Zn(2+): His-67, Asp-69, Glu-181, His-250, and His-271.

This sequence belongs to the metallo-dependent hydrolases superfamily. Peptidase M19 family. In terms of assembly, interacts with dil1. Requires Zn(2+) as cofactor.

It carries out the reaction an L-aminoacyl-L-amino acid + H2O = 2 an L-alpha-amino acid. This is an uncharacterized protein from Schizosaccharomyces pombe (strain 972 / ATCC 24843) (Fission yeast).